A 306-amino-acid chain; its full sequence is ATP synthase F(1) complex subunit gamma, mitochondrial (306 aa).

Residues 1–17 (MNSASKLFVVLASPANQ) constitute a mitochondrion transit peptide.

Belongs to the ATPase gamma chain family. As to quaternary structure, component of the ATP synthase complex composed at least of ATP5F1A/subunit alpha, ATP5F1B/subunit beta, ATP5MC1/subunit c (homooctomer), MT-ATP6/subunit a, MT-ATP8/subunit 8, ATP5ME/subunit e, ATP5MF/subunit f, ATP5MG/subunit g, ATP5MK/subunit k, ATP5MJ/subunit j, ATP5F1C/subunit gamma, ATP5F1D/subunit delta, ATP5F1E/subunit epsilon, ATP5PF/subunit F6, ATP5PB/subunit b, ATP5PD/subunit d, ATP5PO/subunit OSCP. ATP synthase complex consists of a soluble F(1) head domain (subunits alpha(3) and beta(3)) - the catalytic core - and a membrane F(0) domain - the membrane proton channel (subunits c, a, 8, e, f, g, k and j). These two domains are linked by a central stalk (subunits gamma, delta, and epsilon) rotating inside the F1 region and a stationary peripheral stalk (subunits F6, b, d, and OSCP).

The protein localises to the mitochondrion inner membrane. Its function is as follows. Subunit gamma, of the mitochondrial membrane ATP synthase complex (F(1)F(0) ATP synthase or Complex V) that produces ATP from ADP in the presence of a proton gradient across the membrane which is generated by electron transport complexes of the respiratory chain. ATP synthase complex consist of a soluble F(1) head domain - the catalytic core - and a membrane F(1) domain - the membrane proton channel. These two domains are linked by a central stalk rotating inside the F(1) region and a stationary peripheral stalk. During catalysis, ATP synthesis in the catalytic domain of F(1) is coupled via a rotary mechanism of the central stalk subunits to proton translocation. In vivo, can only synthesize ATP although its ATP hydrolase activity can be activated artificially in vitro. With the central stalk subunit delta, is essential for the biogenesis of F(1) catalytic part of the ATP synthase complex namely in the formation of F1 assembly intermediate. The sequence is that of ATP synthase F(1) complex subunit gamma, mitochondrial from Dictyostelium discoideum (Social amoeba).